The sequence spans 389 residues: Putative nickel insertion protein (389 aa).

Belongs to the LarC family.

In Desulfotalea psychrophila (strain LSv54 / DSM 12343), this protein is Putative nickel insertion protein.